The following is a 567-amino-acid chain: Sensor histidine kinase MtrB (567 aa).

A compositionally biased stretch (basic residues) spans 1–15 (MIFGSRRRIRGRRGR). The interval 1–20 (MIFGSRRRIRGRRGRSGPMT) is disordered. The next 2 helical transmembrane spans lie at 42–62 (VVAL…FVLT) and 213–233 (GTMA…ALLV). Residues 235-287 (RQVVVPVRSASRIAERFAEGHLSERMPVRGEDDMARLAVSFNDMAESLSRQIA) form the HAMP domain. The region spanning 302–519 (DVSHELRTPL…CFRLTLPMVR (218 aa)) is the Histidine kinase domain. His305 is subject to Phosphohistidine; by autocatalysis. Positions 529–551 (PMKPIPQPVLQPVAQPNPQPMPP) are enriched in pro residues. A disordered region spans residues 529–567 (PMKPIPQPVLQPVAQPNPQPMPPEYKERQRPREHAEWSG). Positions 552-567 (EYKERQRPREHAEWSG) are enriched in basic and acidic residues.

Interacts with MrtA. Interacts with LpqB, probably extracytoplasmically via MtrB's sensor domain. Requires Mg(2+) as cofactor. The cofactor is Ca(2+). In terms of processing, the C-terminal domain (residues 234-567) autophosphorylates.

The protein resides in the cell membrane. It carries out the reaction ATP + protein L-histidine = ADP + protein N-phospho-L-histidine.. Ca(2+) ions inhibit the phosphotransfer from MtrB to MtrA. Its function is as follows. Member of the two-component regulatory system MtrA/MtrB. Probably functions as a membrane-associated protein kinase that phosphorylates MtrA in response to environmental signals. Autophosphorylates and transfers phosphate to MtrA in vitro. Overexpression of MtrA alone decreases bacterial virulence in mouse infection; co-expression of MtrA and MtrB restores normal bacterial growth, suggesting that bacterial growth in macrophages requires an optimal ratio of MtrB to MtrA. Probably plays a role in cell division. The sequence is that of Sensor histidine kinase MtrB (mtrB) from Mycobacterium tuberculosis (strain ATCC 25618 / H37Rv).